We begin with the raw amino-acid sequence, 298 residues long: Glutamyl-Q tRNA(Asp) synthetase (298 aa).

L-glutamate is bound by residues 9-13 and Glu45; that span reads RFAPS. The 'HIGH' region motif lies at 12–22; sequence PSPSGELHFGS. Cys101, Cys103, Tyr115, and Cys119 together coordinate Zn(2+). 2 residues coordinate L-glutamate: Tyr172 and Arg190. The short motif at 228–232 is the 'KMSKS' region element; sequence KLSKQ. An ATP-binding site is contributed by Lys231.

This sequence belongs to the class-I aminoacyl-tRNA synthetase family. GluQ subfamily. It depends on Zn(2+) as a cofactor.

Functionally, catalyzes the tRNA-independent activation of glutamate in presence of ATP and the subsequent transfer of glutamate onto a tRNA(Asp). Glutamate is transferred on the 2-amino-5-(4,5-dihydroxy-2-cyclopenten-1-yl) moiety of the queuosine in the wobble position of the QUC anticodon. The chain is Glutamyl-Q tRNA(Asp) synthetase from Salmonella paratyphi A (strain ATCC 9150 / SARB42).